The following is a 444-amino-acid chain: Phosphoribosylamine--glycine ligase (444 aa).

The region spanning 109 to 324 is the ATP-grasp domain; sequence RNLFKKYEID…FLDVCFAIAE (216 aa). 140–202 provides a ligand contact to ATP; the sequence is MTSLGKDVVV…EEKLVGVEFT (63 aa). 3 residues coordinate Mg(2+): glutamine 282, glutamate 294, and asparagine 296. 3 residues coordinate Mn(2+): glutamine 282, glutamate 294, and asparagine 296.

The protein belongs to the GARS family. Mg(2+) is required as a cofactor. The cofactor is Mn(2+).

It carries out the reaction 5-phospho-beta-D-ribosylamine + glycine + ATP = N(1)-(5-phospho-beta-D-ribosyl)glycinamide + ADP + phosphate + H(+). It participates in purine metabolism; IMP biosynthesis via de novo pathway; N(1)-(5-phospho-D-ribosyl)glycinamide from 5-phospho-alpha-D-ribose 1-diphosphate: step 2/2. This is Phosphoribosylamine--glycine ligase from Methanococcus maripaludis (strain DSM 14266 / JCM 13030 / NBRC 101832 / S2 / LL).